The primary structure comprises 122 residues: Large ribosomal subunit protein uL14 (122 aa).

This sequence belongs to the universal ribosomal protein uL14 family. In terms of assembly, part of the 50S ribosomal subunit. Forms a cluster with proteins L3 and L19. In the 70S ribosome, L14 and L19 interact and together make contacts with the 16S rRNA in bridges B5 and B8.

In terms of biological role, binds to 23S rRNA. Forms part of two intersubunit bridges in the 70S ribosome. In Cutibacterium acnes (strain DSM 16379 / KPA171202) (Propionibacterium acnes), this protein is Large ribosomal subunit protein uL14.